Reading from the N-terminus, the 235-residue chain is Purine nucleoside phosphorylase DeoD-type (235 aa).

His4 contacts a purine D-ribonucleoside. Residues Gly20, Arg24, Arg43, and 87–90 (RVGT) contribute to the phosphate site. A purine D-ribonucleoside is bound by residues Glu162, 179-181 (EME), and 203-204 (SD). Asp204 functions as the Proton donor in the catalytic mechanism.

This sequence belongs to the PNP/UDP phosphorylase family. As to quaternary structure, homohexamer; trimer of homodimers.

It catalyses the reaction a purine D-ribonucleoside + phosphate = a purine nucleobase + alpha-D-ribose 1-phosphate. The enzyme catalyses a purine 2'-deoxy-D-ribonucleoside + phosphate = a purine nucleobase + 2-deoxy-alpha-D-ribose 1-phosphate. Functionally, catalyzes the reversible phosphorolytic breakdown of the N-glycosidic bond in the beta-(deoxy)ribonucleoside molecules, with the formation of the corresponding free purine bases and pentose-1-phosphate. In Bacillus anthracis (strain CDC 684 / NRRL 3495), this protein is Purine nucleoside phosphorylase DeoD-type.